The primary structure comprises 293 residues: Protease HtpX homolog (293 aa).

2 helical membrane-spanning segments follow: residues 4–24 and 40–60; these read IFLF…TLRV and SLLI…LLIS. His-146 is a binding site for Zn(2+). Residue Glu-147 is part of the active site. Zn(2+) is bound at residue His-150. Helical transmembrane passes span 161–181 and 197–217; these read LIQG…GYFI and FITV…IVAW. Glu-223 serves as a coordination point for Zn(2+).

This sequence belongs to the peptidase M48B family. Zn(2+) serves as cofactor.

It is found in the cell inner membrane. This Bordetella petrii (strain ATCC BAA-461 / DSM 12804 / CCUG 43448) protein is Protease HtpX homolog.